The sequence spans 62 residues: Toxin Tb2-II (62 aa).

One can recognise an LCN-type CS-alpha/beta domain in the interval 1–62; that stretch reads KEGYAMDHEG…KVWDYATNKC (62 aa). 4 cysteine pairs are disulfide-bonded: Cys-11–Cys-62, Cys-15–Cys-38, Cys-23–Cys-43, and Cys-27–Cys-45.

The protein belongs to the long (4 C-C) scorpion toxin superfamily. Sodium channel inhibitor family. Beta subfamily. As to expression, expressed by the venom gland.

The protein resides in the secreted. Beta toxins bind voltage-independently at site-4 of sodium channels (Nav) and shift the voltage of activation toward more negative potentials thereby affecting sodium channel activation and promoting spontaneous and repetitive firing. This toxin is active against both mammals and insects. The chain is Toxin Tb2-II from Tityus bahiensis (Brazilian scorpion).